The following is a 545-amino-acid chain: Glucose-6-phosphate isomerase (545 aa).

Catalysis depends on Glu351, which acts as the Proton donor. Active-site residues include His382 and Lys510.

Belongs to the GPI family.

It is found in the cytoplasm. It carries out the reaction alpha-D-glucose 6-phosphate = beta-D-fructose 6-phosphate. Its pathway is carbohydrate biosynthesis; gluconeogenesis. The protein operates within carbohydrate degradation; glycolysis; D-glyceraldehyde 3-phosphate and glycerone phosphate from D-glucose: step 2/4. Functionally, catalyzes the reversible isomerization of glucose-6-phosphate to fructose-6-phosphate. This chain is Glucose-6-phosphate isomerase, found in Shewanella loihica (strain ATCC BAA-1088 / PV-4).